The chain runs to 193 residues: Cytidylate kinase (193 aa).

12 to 20 (GLPGSGTTT) contributes to the ATP binding site.

This sequence belongs to the cytidylate kinase family. Type 2 subfamily.

It localises to the cytoplasm. The catalysed reaction is CMP + ATP = CDP + ADP. It carries out the reaction dCMP + ATP = dCDP + ADP. This chain is Cytidylate kinase, found in Methanopyrus kandleri (strain AV19 / DSM 6324 / JCM 9639 / NBRC 100938).